The following is a 105-amino-acid chain: Large ribosomal subunit protein uL24 (105 aa).

The protein belongs to the universal ribosomal protein uL24 family. Part of the 50S ribosomal subunit.

One of two assembly initiator proteins, it binds directly to the 5'-end of the 23S rRNA, where it nucleates assembly of the 50S subunit. In terms of biological role, one of the proteins that surrounds the polypeptide exit tunnel on the outside of the subunit. This Beijerinckia indica subsp. indica (strain ATCC 9039 / DSM 1715 / NCIMB 8712) protein is Large ribosomal subunit protein uL24.